A 129-amino-acid polypeptide reads, in one-letter code: MKAVLLALALVYGSQGTEYGGGKMTEADYGEMVRREKCIMFVKRFCPYSIRARELLHDRGVGCKIIEVDNNLDAYSFAKRNHSTFPVFFLDGDLVEGGCEKLLVLSDSNLPPFDKSPLLTQNREPVLLD.

The Glutaredoxin domain maps to 26–126 (EADYGEMVRR…PLLTQNREPV (101 aa)).

The protein belongs to the glutaredoxin family.

The protein localises to the cytoplasm. Its function is as follows. Has a glutathione-disulfide oxidoreductase activity in the presence of NADPH and glutathione reductase. Reduces low molecular weight disulfides and proteins. The chain is Glutaredoxin-like protein ECU08_1380 from Encephalitozoon cuniculi (strain GB-M1) (Microsporidian parasite).